Reading from the N-terminus, the 141-residue chain is Hemoglobin subunit alpha-1 (141 aa).

The 141-residue stretch at 1–141 (VLSPADKNNV…VSTVLTSKYR (141 aa)) folds into the Globin domain. His-58 is a binding site for O2. His-87 lines the heme b pocket.

Belongs to the globin family. As to quaternary structure, heterotetramer of two alpha chains and two beta chains. As to expression, red blood cells.

Functionally, involved in oxygen transport from the lung to the various peripheral tissues. The protein is Hemoglobin subunit alpha-1 of Varecia variegata (Black-and-white ruffed lemur).